A 338-amino-acid polypeptide reads, in one-letter code: Putative peptide import ATP-binding protein BruAb2_0796 (338 aa).

Positions 7–263 (LDIEGLRTVF…PRHPYTMGLL (257 aa)) constitute an ABC transporter domain. Residue 43 to 50 (GESGSGKS) participates in ATP binding.

The protein belongs to the ABC transporter superfamily. As to quaternary structure, the complex is composed of two ATP-binding proteins (BruAb2_0796 and BruAb2_0797), two transmembrane proteins (BruAb2_0794) and a solute-binding protein (BruAb2_0792).

The protein localises to the cell inner membrane. Probably part of an ABC transporter complex that could be involved in peptide import. Probably responsible for energy coupling to the transport system. The polypeptide is Putative peptide import ATP-binding protein BruAb2_0796 (Brucella abortus biovar 1 (strain 9-941)).